The primary structure comprises 424 residues: UDP-N-acetylglucosamine 1-carboxyvinyltransferase (424 aa).

22–23 (KN) serves as a coordination point for phosphoenolpyruvate. UDP-N-acetyl-alpha-D-glucosamine is bound at residue R93. Catalysis depends on C117, which acts as the Proton donor. C117 carries the post-translational modification 2-(S-cysteinyl)pyruvic acid O-phosphothioketal. UDP-N-acetyl-alpha-D-glucosamine is bound by residues 162-165 (KVSV), D307, and I329.

The protein belongs to the EPSP synthase family. MurA subfamily.

The protein resides in the cytoplasm. It catalyses the reaction phosphoenolpyruvate + UDP-N-acetyl-alpha-D-glucosamine = UDP-N-acetyl-3-O-(1-carboxyvinyl)-alpha-D-glucosamine + phosphate. Its pathway is cell wall biogenesis; peptidoglycan biosynthesis. Its function is as follows. Cell wall formation. Adds enolpyruvyl to UDP-N-acetylglucosamine. In Actinobacillus pleuropneumoniae serotype 3 (strain JL03), this protein is UDP-N-acetylglucosamine 1-carboxyvinyltransferase.